A 334-amino-acid chain; its full sequence is Heat-inducible transcription repressor HrcA (334 aa).

This sequence belongs to the HrcA family.

Functionally, negative regulator of class I heat shock genes (grpE-dnaK-dnaJ and groELS operons). Prevents heat-shock induction of these operons. The polypeptide is Heat-inducible transcription repressor HrcA (Bordetella bronchiseptica (strain ATCC BAA-588 / NCTC 13252 / RB50) (Alcaligenes bronchisepticus)).